Here is a 202-residue protein sequence, read N- to C-terminus: Imidazoleglycerol-phosphate dehydratase (202 aa).

The protein belongs to the imidazoleglycerol-phosphate dehydratase family.

The protein resides in the cytoplasm. The catalysed reaction is D-erythro-1-(imidazol-4-yl)glycerol 3-phosphate = 3-(imidazol-4-yl)-2-oxopropyl phosphate + H2O. Its pathway is amino-acid biosynthesis; L-histidine biosynthesis; L-histidine from 5-phospho-alpha-D-ribose 1-diphosphate: step 6/9. This is Imidazoleglycerol-phosphate dehydratase from Rhizobium leguminosarum bv. trifolii (strain WSM2304).